The chain runs to 192 residues: Cytochrome b-245 light chain (192 aa).

Over 2–7 the chain is Cytoplasmic; sequence GQIEWA. Residues 8–30 traverse the membrane as a helical segment; that stretch reads MWANEQALASGLILMTGGIVATA. Residues 31–35 lie on the Extracellular side of the membrane; the sequence is GQFTQ. Residues 36-53 traverse the membrane as a helical segment; it reads WYLGTYSIAAGVLVCLLE. Topologically, residues 54–69 are cytoplasmic; that stretch reads YPRGRRTKGSTMERCE. Residues 70–80 lie within the membrane without spanning it; that stretch reads QKYMTKVVKAF. Residues 81–86 lie on the Cytoplasmic side of the membrane; that stretch reads GPLSRN. The helical transmembrane segment at 87 to 104 threads the bilayer; sequence YYIRAFLHLGLSVPAGFL. Position 105 (L105) is a topological domain, extracellular. The chain crosses the membrane as a helical span at residues 106 to 126; it reads ATILGTACLAIASGIYLLAAI. The Cytoplasmic segment spans residues 127–192; sequence RGEQWTPIEP…TPCPVTDEVV (66 aa). Positions 134-192 are disordered; sequence IEPKPKERPQVGGTIKQPPSNPPPRPPPEARKKPGEEAVAGVPRGAPRKTPCPVTDEVV. T147 bears the Phosphothreonine mark. K149 is covalently cross-linked (Glycyl lysine isopeptide (Lys-Gly) (interchain with G-Cter in ubiquitin)).

This sequence belongs to the p22phox family. Component of the phagocyte NADPH oxidase core complex/cytochrome b558 complex, composed of CYBB (heavy chain (beta)) and CYBA (light chain (alpha)). Component of the phagocyte NADPH oxidase complex composed of an obligatory core heterodimer formed by the membrane proteins CYBA and CYBB and the cytosolic regulatory subunits NCF1/p47-phox, NCF2/p67-phox, NCF4/p40-phox and the small GTPase RAC1 or RAC2. Interacts with NCF1 (via SH3 domain). Interacts with SH3PXD2A. Interacts with DUOX1, DUOX2 and TPO. Interacts with NOX4; this interaction mediates superoxide generation. Interacts with calprotectin (S100A8/9). Interacts with GBP7. Interacts with NOXO1. Forms a heterodimer with NOX3 and is essential for activity and cell membrane localization of NOX3. Interacts with NOX1. In terms of processing, phosphorylation at Thr-147 enhances NADPH oxidase activity by promoting NCF1/p47-phox binding. Ubiquitinated at Lys-149 likely by RNF145.

The protein localises to the cell membrane. Its function is as follows. Subunit of NADPH oxidase complexes that is required for the NADPH oxidase activity that generates, in various cell types, superoxide from molecular oxygen utilizing NADPH as an electron donor. Subunit of the phagocyte NADPH oxidase complex that mediates the transfer of electrons from cytosolic NADPH to O2 to produce the superoxide anion (O2(-)). In the activated complex, electrons are first transferred from NADPH to flavin adenine dinucleotide (FAD) and subsequently transferred via two heme molecules to molecular oxygen, producing superoxide through an outer-sphere reaction. Activation of the NADPH oxidase complex is initiated by the assembly of cytosolic subunits of the NADPH oxidase complex with the core NADPH oxidase complex to form a complex at the plasma membrane or phagosomal membrane. This activation process is initiated by phosphorylation dependent binding of the cytosolic NCF1/p47-phox subunit to the C-terminus of CYBA/p22-phox. Aassociates with NOX3 to form a functional NADPH oxidase constitutively generating superoxide. The chain is Cytochrome b-245 light chain from Sus scrofa (Pig).